Consider the following 525-residue polypeptide: Eukaryotic translation initiation factor 3 subunit L (525 aa).

The span at Met1–Tyr19 shows a compositional bias: acidic residues. A disordered region spans residues Met1 to Gly21. Residues Asp296–Arg502 enclose the PCI domain.

This sequence belongs to the eIF-3 subunit L family. Component of the eukaryotic translation initiation factor 3 (eIF-3) complex.

Its subcellular location is the cytoplasm. Functionally, component of the eukaryotic translation initiation factor 3 (eIF-3) complex, which is involved in protein synthesis of a specialized repertoire of mRNAs and, together with other initiation factors, stimulates binding of mRNA and methionyl-tRNAi to the 40S ribosome. The eIF-3 complex specifically targets and initiates translation of a subset of mRNAs involved in cell proliferation. This Nematostella vectensis (Starlet sea anemone) protein is Eukaryotic translation initiation factor 3 subunit L.